A 341-amino-acid chain; its full sequence is Uroporphyrinogen decarboxylase (341 aa).

Substrate-binding positions include 25–29, Phe44, Asp74, Tyr151, Ser206, and His318; that span reads RQAGR.

The protein belongs to the uroporphyrinogen decarboxylase family. In terms of assembly, homodimer.

It localises to the cytoplasm. It carries out the reaction uroporphyrinogen III + 4 H(+) = coproporphyrinogen III + 4 CO2. It functions in the pathway porphyrin-containing compound metabolism; protoporphyrin-IX biosynthesis; coproporphyrinogen-III from 5-aminolevulinate: step 4/4. Functionally, catalyzes the decarboxylation of four acetate groups of uroporphyrinogen-III to yield coproporphyrinogen-III. The polypeptide is Uroporphyrinogen decarboxylase (Christiangramia forsetii (strain DSM 17595 / CGMCC 1.15422 / KT0803) (Gramella forsetii)).